Reading from the N-terminus, the 172-residue chain is 3-hydroxydecanoyl-[acyl-carrier-protein] dehydratase (172 aa).

Residue histidine 71 is part of the active site.

It belongs to the thioester dehydratase family. FabA subfamily. As to quaternary structure, homodimer.

It localises to the cytoplasm. The catalysed reaction is a (3R)-hydroxyacyl-[ACP] = a (2E)-enoyl-[ACP] + H2O. The enzyme catalyses (3R)-hydroxydecanoyl-[ACP] = (2E)-decenoyl-[ACP] + H2O. It catalyses the reaction (2E)-decenoyl-[ACP] = (3Z)-decenoyl-[ACP]. The protein operates within lipid metabolism; fatty acid biosynthesis. In terms of biological role, necessary for the introduction of cis unsaturation into fatty acids. Catalyzes the dehydration of (3R)-3-hydroxydecanoyl-ACP to E-(2)-decenoyl-ACP and then its isomerization to Z-(3)-decenoyl-ACP. Can catalyze the dehydratase reaction for beta-hydroxyacyl-ACPs with saturated chain lengths up to 16:0, being most active on intermediate chain length. This chain is 3-hydroxydecanoyl-[acyl-carrier-protein] dehydratase, found in Vibrio vulnificus (strain CMCP6).